Consider the following 79-residue polypeptide: Cell division protein ZapB (79 aa).

A coiled-coil region spans residues 3 to 79; sequence LEVFEKLEAK…QALLGRMEEV (77 aa). Lysine 8 carries the post-translational modification N6-acetyllysine. The disordered stretch occupies residues 34 to 65; it reads NNSLSQEVQNAQHQREELERENNHLKEQQNGW. Residues 35 to 45 show a composition bias toward polar residues; it reads NSLSQEVQNAQ. A compositionally biased stretch (basic and acidic residues) spans 46–60; the sequence is HQREELERENNHLKE.

Belongs to the ZapB family. Homodimer. The ends of the coiled-coil dimer bind to each other, forming polymers. Interacts with FtsZ.

Its subcellular location is the cytoplasm. Its function is as follows. Non-essential, abundant cell division factor that is required for proper Z-ring formation. It is recruited early to the divisome by direct interaction with FtsZ, stimulating Z-ring assembly and thereby promoting cell division earlier in the cell cycle. Its recruitment to the Z-ring requires functional FtsA or ZipA. The chain is Cell division protein ZapB from Shigella boydii serotype 18 (strain CDC 3083-94 / BS512).